Reading from the N-terminus, the 323-residue chain is RNA polymerase sigma factor SigB (323 aa).

Residues 1-228 are sufficient to interact with RbpA; the sequence is MADAPTRATT…DMPVGSEEEA (228 aa). A sigma-70 factor domain-1 region spans residues 25-59; it reads DLVRVYLNGIGKTALLNAAGEVELAKRIEAGLYAE. A sigma-70 factor domain-2 region spans residues 90–160; sequence LLEANLRLVV…TRGMADQSRT (71 aa). The Polymerase core binding motif lies at 114–117; that stretch reads DLIQ. The sigma-70 factor domain-3 stretch occupies residues 169-245; sequence EQVNKLARIK…DAEAMSAENA (77 aa). Residues 258–311 are sigma-70 factor domain-4; sequence VLATLDEREHQVIRLRFGLDDGQPRTLDQIGKLFGLSRERVRQIERDVMSKLRH. The segment at residues 284–303 is a DNA-binding region (H-T-H motif); the sequence is LDQIGKLFGLSRERVRQIER.

This sequence belongs to the sigma-70 factor family. As to quaternary structure, monomer. Interacts transiently with the RNA polymerase catalytic core formed by RpoA, RpoB, RpoC and RpoZ (2 alpha, 1 beta, 1 beta' and 1 omega subunit) to form the RNA polymerase holoenzyme that can initiate transcription.

In terms of biological role, sigma factors are initiation factors that promote the attachment of RNA polymerase to specific initiation sites and are then released. A non-essential principal sigma factor that responds to cell envelope stress and hypoxia. In Mycobacterium tuberculosis (strain CDC 1551 / Oshkosh), this protein is RNA polymerase sigma factor SigB (sigB).